Consider the following 194-residue polypeptide: FMN-dependent NADH:quinone oxidoreductase (194 aa).

Residues serine 9, 15–17 (SIS), and 85–88 (MYNF) contribute to the FMN site.

The protein belongs to the azoreductase type 1 family. As to quaternary structure, homodimer. FMN serves as cofactor.

The catalysed reaction is 2 a quinone + NADH + H(+) = 2 a 1,4-benzosemiquinone + NAD(+). The enzyme catalyses N,N-dimethyl-1,4-phenylenediamine + anthranilate + 2 NAD(+) = 2-(4-dimethylaminophenyl)diazenylbenzoate + 2 NADH + 2 H(+). Its function is as follows. Quinone reductase that provides resistance to thiol-specific stress caused by electrophilic quinones. Functionally, also exhibits azoreductase activity. Catalyzes the reductive cleavage of the azo bond in aromatic azo compounds to the corresponding amines. This chain is FMN-dependent NADH:quinone oxidoreductase, found in Xanthomonas oryzae pv. oryzae (strain KACC10331 / KXO85).